A 320-amino-acid polypeptide reads, in one-letter code: Cytochrome f (320 aa).

The N-terminal stretch at 1-35 is a signal peptide; it reads MENRKTFSWLKEQMIRSISVSIMIYVITRTSISNA. Positions 36, 56, 59, and 60 each coordinate heme. The helical transmembrane segment at 286 to 305 threads the bilayer; that stretch reads VQGLLFFFASVILAQVFLVL.

It belongs to the cytochrome f family. The 4 large subunits of the cytochrome b6-f complex are cytochrome b6, subunit IV (17 kDa polypeptide, petD), cytochrome f and the Rieske protein, while the 4 small subunits are PetG, PetL, PetM and PetN. The complex functions as a dimer. Heme serves as cofactor.

It localises to the plastid. The protein localises to the chloroplast thylakoid membrane. In terms of biological role, component of the cytochrome b6-f complex, which mediates electron transfer between photosystem II (PSII) and photosystem I (PSI), cyclic electron flow around PSI, and state transitions. This chain is Cytochrome f (petA), found in Zea mays (Maize).